Consider the following 914-residue polypeptide: MAETLSGLGDSGAAGAAALSSASSETGTRRLSDLRVIDLRAELRKRNVDSSGNKSVLMERLKKAIEDEGGNPDEIEITSEGNKKTSKRSSKGRKPEEEGVEDNGLEENSGDGQEDVETSLENLQDIDIMDISVLDEAEIDNGSVADCVEDDDADNLQESLSDSRELVEGEMKELPEQLQEHAIEDKETINNLDTSSSDFTILQEIEEPSLEPENEKILDILGETCKSEPVKEESSELEQPFAQDTSSVGPDRKLAEEEDLFDSAHPEEGDLDLASESTAHAQSSKADSLLAVVKREPAEQPGDGERTDCEPVGLEPAVEQSSAASELAEASSEELAEAPTEAPSPEARDSKEDGRKFDFDACNEVPPAPKESSTSEGADQKMSSPEDDSDTKRLSKEEKGRSSCGRNFWVSGLSSTTRATDLKNLFSKYGKVVGAKVVTNARSPGARCYGFVTMSTAEEATKCINHLHKTELHGKMISVEKAKNEPVGKKTSDKRDSDGKKEKSSNSDRSANLKRDDKCDRKDDAKKGDDGSGEKSKDQDDQKPGPSERSRATKSGSRGTERTVVMDKSKGVPVISVKTSGSKERASKSLDRKSASREKRSVVSFDKVKEPRKSRDSESHRVRERSEREQRMQAQWEREERERLEIARERLAFQRQRLERERMERERLERERMHVEHERRREQERIHREREELRRQQELRYEQERRPAVRRPYDLDRRDDAYWPEAKRAALDERYHSDFNRQDRFHDFDHRDRGRYPDHSVDRREGSRSMMGEREGQHYPERHGGPERHGRDSRDGWGGYGSDKRMSEGRGLPPPPRRDWGDHGRREDDRAWQGTADGGMMDRDHKRWQGGERSMSGHSGPGHMMNRGGMSGRGSFAPGGASRGHPIPHGGMQGGFGGQSRGSRPSDARFTRRY.

Low complexity predominate over residues 1-24; it reads MAETLSGLGDSGAAGAAALSSASS. The segment at 1 to 33 is disordered; that stretch reads MAETLSGLGDSGAAGAAALSSASSETGTRRLSD. Ala2 is subject to N-acetylalanine. Ser24 and Ser55 each carry phosphoserine. The region spanning 31 to 65 is the SAP domain; the sequence is LSDLRVIDLRAELRKRNVDSSGNKSVLMERLKKAI. The segment at 64-117 is disordered; that stretch reads AIEDEGGNPDEIEITSEGNKKTSKRSSKGRKPEEEGVEDNGLEENSGDGQEDVE. Residues 67–77 show a composition bias toward acidic residues; sequence DEGGNPDEIEI. A Phosphoserine modification is found at Ser79. Positions 98-117 are enriched in acidic residues; the sequence is EGVEDNGLEENSGDGQEDVE. Glycyl lysine isopeptide (Lys-Gly) (interchain with G-Cter in SUMO2) cross-links involve residues Lys172 and Lys186. Thr188 bears the Phosphothreonine mark. Residues Ser195, Ser197, and Ser209 each carry the phosphoserine modification. A disordered region spans residues 221 to 407; that stretch reads LGETCKSEPV…EKGRSSCGRN (187 aa). Residues 225 to 234 show a composition bias toward basic and acidic residues; that stretch reads CKSEPVKEES. Lys231 is covalently cross-linked (Glycyl lysine isopeptide (Lys-Gly) (interchain with G-Cter in SUMO)). Positions 275–286 are enriched in polar residues; that stretch reads SESTAHAQSSKA. Residues 293-309 show a composition bias toward basic and acidic residues; that stretch reads VKREPAEQPGDGERTDC. A Glycyl lysine isopeptide (Lys-Gly) (interchain with G-Cter in SUMO) cross-link involves residue Lys294. Over residues 319 to 330 the composition is skewed to low complexity; that stretch reads EQSSAASELAEA. A compositionally biased stretch (basic and acidic residues) spans 346-359; sequence EARDSKEDGRKFDF. Residues 371–383 are compositionally biased toward polar residues; it reads ESSTSEGADQKMS. Lys381 participates in a covalent cross-link: Glycyl lysine isopeptide (Lys-Gly) (interchain with G-Cter in SUMO2). Ser383 and Ser384 each carry phosphoserine. The segment covering 390–401 has biased composition (basic and acidic residues); the sequence is DTKRLSKEEKGR. Lys392 is covalently cross-linked (Glycyl lysine isopeptide (Lys-Gly) (interchain with G-Cter in SUMO2)). Positions 406–484 constitute an RRM domain; it reads RNFWVSGLSS…KMISVEKAKN (79 aa). Position 415 is a phosphoserine (Ser415). 2 stretches are compositionally biased toward basic and acidic residues: residues 477-551 and 559-570; these read ISVE…ERSR and GTERTVVMDKSK. Disordered regions lie at residues 477–636, 670–706, and 748–914; these read ISVE…QAQW, RERMHVEHERRREQERIHREREELRRQQELRYEQERR, and FDHR…TRRY. Residues Lys483, Lys514, Lys543, and Lys570 each participate in a glycyl lysine isopeptide (Lys-Gly) (interchain with G-Cter in SUMO2) cross-link. The tract at residues 528–791 is interaction with POLR2A; SFRS1; SFRS9 and SFRS10; it reads GDDGSGEKSK…RHGGPERHGR (264 aa). Lys578 is covalently cross-linked (Glycyl lysine isopeptide (Lys-Gly) (interchain with G-Cter in SUMO1); alternate). Lys578 participates in a covalent cross-link: Glycyl lysine isopeptide (Lys-Gly) (interchain with G-Cter in SUMO2); alternate. Phosphoserine occurs at positions 580, 582, 601, and 604. A compositionally biased stretch (basic and acidic residues) spans 581-636; it reads GSKERASKSLDRKSASREKRSVVSFDKVKEPRKSRDSESHRVRERSEREQRMQAQW. The short motif at 599-616 is the Nuclear localization signal element; that stretch reads KRSVVSFDKVKEPRKSRD. The tract at residues 599–914 is interaction with SAFB2; it reads KRSVVSFDKV…PSDARFTRRY (316 aa). The residue at position 607 (Lys607) is an N6-acetyllysine. Residues 748–795 are compositionally biased toward basic and acidic residues; it reads FDHRDRGRYPDHSVDRREGSRSMMGEREGQHYPERHGGPERHGRDSRD. Arg810 bears the Omega-N-methylarginine mark. Basic and acidic residues-rich tracts occupy residues 816–831 and 840–850; these read PRRDWGDHGRREDDRA and MMDRDHKRWQG. A Glycyl lysine isopeptide (Lys-Gly) (interchain with G-Cter in SUMO2) cross-link involves residue Lys846. Asymmetric dimethylarginine occurs at positions 867, 873, and 883. Positions 891-900 are enriched in gly residues; the sequence is GMQGGFGGQS. Over residues 904–914 the composition is skewed to basic and acidic residues; the sequence is RPSDARFTRRY.

In terms of assembly, monomer and homodimer. Interacts with KHDRBS3. Interacts with CLK2. Interacts with POLR2A, ASF/SRSF1, SRp30c/SRFS9 and TRA2B/SFRS10. Interacts with SRPK1 and inhibits its activity. Interacts with RBMX. Interacts with FUS. Interacts with ZBED4. Post-translationally, sumoylated by PIAS1 with SUMO1 and SUMO2/3, desumoylated by SENP1. Sumoylation is required for transcriptional repressor activity.

The protein resides in the nucleus. Its function is as follows. Binds to scaffold/matrix attachment region (S/MAR) DNA and forms a molecular assembly point to allow the formation of a 'transcriptosomal' complex (consisting of SR proteins and RNA polymerase II) coupling transcription and RNA processing. Functions as an estrogen receptor corepressor and can also bind to the HSP27 promoter and decrease its transcription. Thereby acts as a negative regulator of cell proliferation. When associated with RBMX, binds to and stimulates transcription from the SREBF1 promoter. The polypeptide is Scaffold attachment factor B1 (SAFB) (Pongo abelii (Sumatran orangutan)).